The sequence spans 113 residues: Hydrogenase maturation factor HypA (113 aa).

Histidine 2 is a Ni(2+) binding site. Cysteine 70, cysteine 73, cysteine 86, and cysteine 88 together coordinate Zn(2+).

It belongs to the HypA/HybF family.

In terms of biological role, involved in the maturation of [NiFe] hydrogenases. Required for nickel insertion into the metal center of the hydrogenase. The protein is Hydrogenase maturation factor HypA of Trichormus variabilis (strain ATCC 29413 / PCC 7937) (Anabaena variabilis).